We begin with the raw amino-acid sequence, 2381 residues long: Protein Ycf2 (2381 aa).

Residue 1655–1662 (GPMETGRS) participates in ATP binding.

The protein belongs to the Ycf2 family.

It is found in the plastid. The protein resides in the chloroplast stroma. In terms of biological role, probable ATPase of unknown function. Its presence in a non-photosynthetic plant (Epifagus virginiana) and experiments in tobacco indicate that it has an essential function which is probably not related to photosynthesis. This chain is Protein Ycf2, found in Angiopteris evecta (Mule's foot fern).